The chain runs to 185 residues: Photosystem I assembly protein Ycf4 (185 aa).

Helical transmembrane passes span 24 to 44 and 66 to 86; these read YLIG…SISS and IIMG…WYLV.

The protein belongs to the Ycf4 family.

The protein resides in the cellular thylakoid membrane. Functionally, seems to be required for the assembly of the photosystem I complex. The protein is Photosystem I assembly protein Ycf4 of Prochlorococcus marinus (strain MIT 9515).